Here is a 107-residue protein sequence, read N- to C-terminus: Nucleoid-associated protein GDI3467/Gdia_2910 (107 aa).

This sequence belongs to the YbaB/EbfC family. In terms of assembly, homodimer.

Its subcellular location is the cytoplasm. It is found in the nucleoid. In terms of biological role, binds to DNA and alters its conformation. May be involved in regulation of gene expression, nucleoid organization and DNA protection. In Gluconacetobacter diazotrophicus (strain ATCC 49037 / DSM 5601 / CCUG 37298 / CIP 103539 / LMG 7603 / PAl5), this protein is Nucleoid-associated protein GDI3467/Gdia_2910.